The primary structure comprises 214 residues: MVIKVFVATSSGSIAIRKKQQEVVGFLEANKIDFKELDIAGDEDNRKWMRENVPGEKKPQNGIPLPPQIFNEEQYCGDFDSFFSAKEENIIYSFLGLAPPPGSKVTKSEEASSLPNGDVAGEAEGAAEGTEKAEKSGENEAQKEDSEDTGELSESQEKKEEEGEDGEEGEEGEEREEGGEGETTGETEEAPEEGAGGEAEEEEPEEEAGEGEDS.

An SH3-binding motif is present at residues 61–67 (NGIPLPP). A disordered region spans residues 101-214 (PGSKVTKSEE…EEEAGEGEDS (114 aa)). The span at 129 to 144 (GTEKAEKSGENEAQKE) shows a compositional bias: basic and acidic residues. 2 stretches are compositionally biased toward acidic residues: residues 162–192 (EGED…EAPE) and 198–214 (EAEE…GEDS).

It belongs to the SH3BGR family.

This Mus musculus (Mouse) protein is SH3 domain-binding glutamic acid-rich protein (Sh3bgr).